The following is a 145-amino-acid chain: Histone H2B.10 (145 aa).

Residues Met1–Glu15 show a composition bias toward basic and acidic residues. Residues Met1–Lys53 form a disordered region. An N6-methyllysine modification is found at Lys3. N6-acetyllysine occurs at positions 6 and 11. Position 12 is an N6,N6-dimethyllysine (Lys12). Residues Lys16, Lys28, and Lys34 each carry the N6-acetyllysine modification. A compositionally biased stretch (low complexity) spans Lys16–Ala25. The residue at position 35 (Lys35) is an N6-acetyllysine; partial. Lys141 participates in a covalent cross-link: Glycyl lysine isopeptide (Lys-Gly) (interchain with G-Cter in ubiquitin).

This sequence belongs to the histone H2B family. The nucleosome is a histone octamer containing two molecules each of H2A, H2B, H3 and H4 assembled in one H3-H4 heterotetramer and two H2A-H2B heterodimers. The octamer wraps approximately 147 bp of DNA. Interacts with ORTH2. In terms of processing, can be acetylated to form H2BK5ac, H2BK10ac, H2BK15ac, H2BK27ac, H2BK33ac and H2BK34ac. Post-translationally, dimethylated to form H2BK11me2. Monoubiquitinated by BRE1 to form H2BK143ub1 and deubiquitinated by UBP26. Required for heterochromatic histone H3 di- and trimethylation at H3K4me. May give a specific tag for epigenetic transcriptional activation.

Its subcellular location is the nucleus. It is found in the chromosome. Its function is as follows. Core component of nucleosome. Nucleosomes wrap and compact DNA into chromatin, limiting DNA accessibility to the cellular machineries which require DNA as a template. Histones thereby play a central role in transcription regulation, DNA repair, DNA replication and chromosomal stability. DNA accessibility is regulated via a complex set of post-translational modifications of histones, also called histone code, and nucleosome remodeling. The sequence is that of Histone H2B.10 from Arabidopsis thaliana (Mouse-ear cress).